Reading from the N-terminus, the 433-residue chain is Histidinol dehydrogenase 2 (433 aa).

NAD(+) is bound by residues Tyr130, Gln192, and Asn215. Substrate-binding residues include Ser238, Gln260, and His263. Zn(2+) is bound by residues Gln260 and His263. Active-site proton acceptor residues include Glu328 and His329. Substrate contacts are provided by His329, Asp362, Glu416, and His421. Asp362 is a Zn(2+) binding site. Residue His421 coordinates Zn(2+).

The protein belongs to the histidinol dehydrogenase family. It depends on Zn(2+) as a cofactor.

It catalyses the reaction L-histidinol + 2 NAD(+) + H2O = L-histidine + 2 NADH + 3 H(+). It functions in the pathway amino-acid biosynthesis; L-histidine biosynthesis; L-histidine from 5-phospho-alpha-D-ribose 1-diphosphate: step 9/9. Functionally, catalyzes the sequential NAD-dependent oxidations of L-histidinol to L-histidinaldehyde and then to L-histidine. The polypeptide is Histidinol dehydrogenase 2 (hisD2) (Nostoc sp. (strain PCC 7120 / SAG 25.82 / UTEX 2576)).